A 513-amino-acid chain; its full sequence is MGVFSNLRGPRAGATHDEFPATNGSPSSSSSPSSSIKRKLSNLLPLCVALVVIAEIGFLGRLDKVALVDTLTDFFTQSPSLSQSPPARSDRKKIGLFTDRSCEEWLMREDSVTYSRDFTKDPIFISGGEKDFQWCSVDCTFGDSSGKTPDAAFGLGQKPGTLSIIRSMESAQYYPENDLAQARRRGYDIVMTTSLSSDVPVGYFSWAEYDIMSPVQPKTERAIAAAFISNCGARNFRLQALEALMKTNIKIDSYGGCHRNRDGKVDKVEALKRYKFSLAFENTNEEDYVTEKFFQSLVAGSVPVVVGPPNIEEFAPASDSFLHIKTMEDVEPVAKRMKYLAANPAAYNQTLRWKYEGPSDSFKALVDMAAVHSSCRLCIFLATRVREQEEESPNFKKRPCKCSRGGSDTVYHVFVRERGRFEMESVFLRGKSVTQEALESAVLAKFKSLKHEAVWKKERPGNLKGDKELKIHRIYPLGLTQRQALYNFKFEGNSSLSSHIQNNPCAKFEVVFV.

A disordered region spans residues 1-34; the sequence is MGVFSNLRGPRAGATHDEFPATNGSPSSSSSPSS. The Cytoplasmic portion of the chain corresponds to 1–39; the sequence is MGVFSNLRGPRAGATHDEFPATNGSPSSSSSPSSSIKRK. Positions 25 to 34 are enriched in low complexity; that stretch reads SPSSSSSPSS. A helical; Signal-anchor for type II membrane protein transmembrane segment spans residues 40 to 60; that stretch reads LSNLLPLCVALVVIAEIGFLG. Residues 61 to 513 lie on the Lumenal side of the membrane; the sequence is RLDKVALVDT…PCAKFEVVFV (453 aa). Asn348 and Asn493 each carry an N-linked (GlcNAc...) asparagine glycan.

It belongs to the glycosyltransferase 10 family.

Its subcellular location is the golgi apparatus. It localises to the golgi stack membrane. It functions in the pathway protein modification; protein glycosylation. May be involved in cell wall biosynthesis. May act as a fucosyltransferase. This is Putative fucosyltransferase-like protein (FUT12) from Arabidopsis thaliana (Mouse-ear cress).